Reading from the N-terminus, the 474-residue chain is Lipoprotein lipase (474 aa).

The first 27 residues, 1–27 (MESKALLLVALGVWLQSLTAFRGGVAA), serve as a signal peptide directing secretion. The interval 32–53 (RDFSDIESKFALRTPEDTAEDT) is interaction with GPIHBP1. A disulfide bond links cysteine 54 and cysteine 67. N-linked (GlcNAc...) asparagine glycosylation is present at asparagine 70. Tyrosine 121 carries the 3'-nitrotyrosine modification. Serine 159 functions as the Nucleophile in the catalytic mechanism. Aspartate 183 (charge relay system) is an active-site residue. A 3'-nitrotyrosine modification is found at tyrosine 191. The Ca(2+) site is built by alanine 194, arginine 197, serine 199, and aspartate 202. A disulfide bridge connects residues cysteine 243 and cysteine 266. An essential for determining substrate specificity region spans residues 243–266 (CNIGEAIRVIAEKGLGDVDQLVKC). The active-site Charge relay system is the histidine 268. Intrachain disulfides connect cysteine 291/cysteine 310 and cysteine 302/cysteine 305. Positions 341–464 (FHYQVKIHFS…KGKDAAVFVK (124 aa)) constitute a PLAT domain. A 3'-nitrotyrosine modification is found at tyrosine 343. A glycan (N-linked (GlcNAc...) asparagine) is linked at asparagine 386. Positions 417–421 (WSDWW) are important for interaction with lipoprotein particles. Positions 430–434 (KIRVK) are important for heparin binding. The interval 443–467 (IFCAREKVSHLQKGKDAAVFVKCHD) is interaction with GPIHBP1. Cysteines 445 and 465 form a disulfide.

It belongs to the AB hydrolase superfamily. Lipase family. As to quaternary structure, homodimer. Interacts with GPIHBP1 with 1:1 stoichiometry. Interacts with APOC2; the interaction activates LPL activity in the presence of lipids. Interaction with heparan sulfate proteoglycans is required to protect LPL against loss of activity. Associates with lipoprotein particles in blood plasma. Interacts with LMF1 and SEL1L; interaction with SEL1L is required to prevent aggregation of newly synthesized LPL in the endoplasmic reticulum (ER), and for normal export of LPL from the ER to the extracellular space. Interacts with SORL1; SORL1 acts as a sorting receptor, promoting LPL localization to endosomes and later to lysosomes, leading to degradation of newly synthesized LPL. Tyrosine nitration after lipopolysaccharide (LPS) challenge down-regulates the lipase activity.

The protein resides in the cell membrane. It localises to the secreted. It is found in the extracellular space. Its subcellular location is the extracellular matrix. It catalyses the reaction a triacylglycerol + H2O = a diacylglycerol + a fatty acid + H(+). It carries out the reaction a 1,2-diacyl-sn-glycero-3-phosphocholine + H2O = a 2-acyl-sn-glycero-3-phosphocholine + a fatty acid + H(+). The catalysed reaction is 1,2,3-tri-(9Z-octadecenoyl)-glycerol + H2O = di-(9Z)-octadecenoylglycerol + (9Z)-octadecenoate + H(+). The enzyme catalyses 1,2-di-(9Z-octadecenoyl)-sn-glycero-3-phosphocholine + H2O = (9Z-octadecenoyl)-sn-glycero-3-phosphocholine + (9Z)-octadecenoate + H(+). It catalyses the reaction 1,2,3-tributanoylglycerol + H2O = dibutanoylglycerol + butanoate + H(+). It carries out the reaction 1,2-dihexadecanoyl-sn-glycero-3-phosphocholine + H2O = hexadecanoyl-sn-glycero-3-phosphocholine + hexadecanoate + H(+). Its activity is regulated as follows. The apolipoprotein APOC2 acts as a coactivator of LPL activity. Ca(2+) binding promotes protein stability and formation of the active homodimer. Interaction with GPIHBP1 protects LPL against inactivation by ANGPTL4. Key enzyme in triglyceride metabolism. Catalyzes the hydrolysis of triglycerides from circulating chylomicrons and very low density lipoproteins (VLDL), and thereby plays an important role in lipid clearance from the blood stream, lipid utilization and storage. Although it has both phospholipase and triglyceride lipase activities it is primarily a triglyceride lipase with low but detectable phospholipase activity. Mediates margination of triglyceride-rich lipoprotein particles in capillaries. Recruited to its site of action on the luminal surface of vascular endothelium by binding to GPIHBP1 and cell surface heparan sulfate proteoglycans. This is Lipoprotein lipase (Lpl) from Rattus norvegicus (Rat).